A 453-amino-acid chain; its full sequence is tRNA modification GTPase MnmE (453 aa).

Arginine 22, glutamate 79, and lysine 119 together coordinate (6S)-5-formyl-5,6,7,8-tetrahydrofolate. The region spanning 215-376 (GMKVVIAGRP…LREHLKACMG (162 aa)) is the TrmE-type G domain. Asparagine 225 is a K(+) binding site. GTP-binding positions include 225-230 (NAGKSS), 244-250 (TEIAGTT), 269-272 (DTAG), and 334-337 (NKAD). Position 229 (serine 229) interacts with Mg(2+). Positions 244, 246, and 249 each coordinate K(+). Threonine 250 contributes to the Mg(2+) binding site. A (6S)-5-formyl-5,6,7,8-tetrahydrofolate-binding site is contributed by lysine 453.

The protein belongs to the TRAFAC class TrmE-Era-EngA-EngB-Septin-like GTPase superfamily. TrmE GTPase family. In terms of assembly, homodimer. Heterotetramer of two MnmE and two MnmG subunits. K(+) is required as a cofactor.

It localises to the cytoplasm. Its function is as follows. Exhibits a very high intrinsic GTPase hydrolysis rate. Involved in the addition of a carboxymethylaminomethyl (cmnm) group at the wobble position (U34) of certain tRNAs, forming tRNA-cmnm(5)s(2)U34. In Aeromonas hydrophila subsp. hydrophila (strain ATCC 7966 / DSM 30187 / BCRC 13018 / CCUG 14551 / JCM 1027 / KCTC 2358 / NCIMB 9240 / NCTC 8049), this protein is tRNA modification GTPase MnmE.